Here is a 108-residue protein sequence, read N- to C-terminus: Integration host factor subunit alpha (108 aa).

It belongs to the bacterial histone-like protein family. As to quaternary structure, heterodimer of an alpha and a beta chain.

Functionally, this protein is one of the two subunits of integration host factor, a specific DNA-binding protein that functions in genetic recombination as well as in transcriptional and translational control. The sequence is that of Integration host factor subunit alpha from Bartonella henselae (strain ATCC 49882 / DSM 28221 / CCUG 30454 / Houston 1) (Rochalimaea henselae).